Reading from the N-terminus, the 238-residue chain is Purine nucleoside phosphorylase DeoD-type 1 (238 aa).

Residue His5 participates in a purine D-ribonucleoside binding. Phosphate contacts are provided by residues Gly21, Arg25, Arg44, and 88 to 91; that span reads RVGS. A purine D-ribonucleoside-binding positions include 180–182 and 204–205; these read EME and SD. The Proton donor role is filled by Asp205.

Belongs to the PNP/UDP phosphorylase family. As to quaternary structure, homohexamer; trimer of homodimers.

The enzyme catalyses a purine D-ribonucleoside + phosphate = a purine nucleobase + alpha-D-ribose 1-phosphate. It carries out the reaction a purine 2'-deoxy-D-ribonucleoside + phosphate = a purine nucleobase + 2-deoxy-alpha-D-ribose 1-phosphate. Its function is as follows. Catalyzes the reversible phosphorolytic breakdown of the N-glycosidic bond in the beta-(deoxy)ribonucleoside molecules, with the formation of the corresponding free purine bases and pentose-1-phosphate. In Aliivibrio fischeri (strain ATCC 700601 / ES114) (Vibrio fischeri), this protein is Purine nucleoside phosphorylase DeoD-type 1.